The following is a 282-amino-acid chain: uncharacterized protein (282 aa).

This is an uncharacterized protein from Mycoplasma pneumoniae (strain ATCC 29342 / M129 / Subtype 1) (Mycoplasmoides pneumoniae).